The sequence spans 277 residues: Tryptophan synthase alpha chain (277 aa).

Active-site proton acceptor residues include E59 and D70.

It belongs to the TrpA family. In terms of assembly, tetramer of two alpha and two beta chains.

It catalyses the reaction (1S,2R)-1-C-(indol-3-yl)glycerol 3-phosphate + L-serine = D-glyceraldehyde 3-phosphate + L-tryptophan + H2O. The protein operates within amino-acid biosynthesis; L-tryptophan biosynthesis; L-tryptophan from chorismate: step 5/5. The alpha subunit is responsible for the aldol cleavage of indoleglycerol phosphate to indole and glyceraldehyde 3-phosphate. This chain is Tryptophan synthase alpha chain, found in Streptomyces avermitilis (strain ATCC 31267 / DSM 46492 / JCM 5070 / NBRC 14893 / NCIMB 12804 / NRRL 8165 / MA-4680).